Reading from the N-terminus, the 290-residue chain is Shikimate dehydrogenase (NADP(+)) (290 aa).

Residues 19 to 21 and S65 contribute to the shikimate site; that span reads SLS. Residue K69 is the Proton acceptor of the active site. Positions 90 and 105 each coordinate shikimate. NADP(+) contacts are provided by residues 129 to 133 and L231; that span reads GAGGA. Y233 provides a ligand contact to shikimate. G254 contributes to the NADP(+) binding site.

The protein belongs to the shikimate dehydrogenase family. As to quaternary structure, homodimer.

The enzyme catalyses shikimate + NADP(+) = 3-dehydroshikimate + NADPH + H(+). The protein operates within metabolic intermediate biosynthesis; chorismate biosynthesis; chorismate from D-erythrose 4-phosphate and phosphoenolpyruvate: step 4/7. Its function is as follows. Involved in the biosynthesis of the chorismate, which leads to the biosynthesis of aromatic amino acids. Catalyzes the reversible NADPH linked reduction of 3-dehydroshikimate (DHSA) to yield shikimate (SA). The chain is Shikimate dehydrogenase (NADP(+)) from Latilactobacillus sakei subsp. sakei (strain 23K) (Lactobacillus sakei subsp. sakei).